Reading from the N-terminus, the 155-residue chain is 17.3 kDa class II heat shock protein (155 aa).

The sHSP domain maps to 39–155 (DAKAMAATPA…KPKTIEVKVA (117 aa)).

It belongs to the small heat shock protein (HSP20) family.

It is found in the cytoplasm. The polypeptide is 17.3 kDa class II heat shock protein (Solanum peruvianum (Peruvian tomato)).